We begin with the raw amino-acid sequence, 544 residues long: Propane 2-monooxygenase, hydroxylase component large subunit (544 aa).

6 residues coordinate Fe cation: glutamate 97, glutamate 127, histidine 130, glutamate 192, glutamate 226, and histidine 229.

This sequence belongs to the TmoA/XamoA family. The propane 2-monooxygenase multicomponent enzyme system is composed of an electron transfer component and a monooxygenase component interacting with the effector protein PrmD. The electron transfer component is composed of a reductase (PrmB), and the monooxygenase component is formed by a large subunit (PrmA) and a small subunit (PrmC). Probably requires the presence of the chaperonin-like protein PrmG to ensure a productive folding, resulting of a soluble PrmA, which leads to the active form of PrmABCD. Fe(2+) is required as a cofactor.

It carries out the reaction propane + NADH + O2 + H(+) = propan-2-ol + NAD(+) + H2O. Functionally, component of the propane 2-monooxygenase multicomponent enzyme system which is involved in the degradation of propane via the O2-dependent hydroxylation of propane. Also able to catalyze the oxidation the water contaminant N-nitrosodimethylamine (NDMA). This chain is Propane 2-monooxygenase, hydroxylase component large subunit, found in Rhodococcus jostii (strain RHA1).